The sequence spans 316 residues: Probable thioesterase lcsE (316 aa).

It belongs to the AMT4 thioesterase family.

Its pathway is secondary metabolite biosynthesis. Probable thioesterase; part of the gene cluster that mediates the biosynthesis of the lipopeptide antibiotics leucinostatins that show extensive biological activities, including antimalarial, antiviral, antibacterial, antifungal, and antitumor activities, as well as phytotoxic. Leucinostatin A contains nine amino acid residues, including the unusual amino acid 4-methyl-L-proline (MePro), 2-amino-6-hydroxy-4-methyl-8-oxodecanoic acid (AHyMeOA), 3-hydroxyleucine (HyLeu), alpha-aminoisobutyric acid (AIB), beta-Ala, a 4-methylhex-2-enoic acid at the N-terminus as well as a N1,N1-dimethylpropane-1,2-diamine (DPD) at the C-terminus. The biosynthesis of leucinostatins is probably initiated with the assembly of 4-methylhex-2-enoic acid by a reducing PKS. Two reducing polyketide synthases, lcsB and lcsC, have been identified in the cluster and it is not clear which is the one that assembles 4-methylhex-2-enoic acid since both contain KS, AT, DH, cMT, ER, KR and ACP domains. The polyketide residue might be transferred to the NRPS lcsA, mediated by two additional enzymes, the acyl-CoA ligase lcsD and the thioesterase lcsE. The linear polyketide carboxylic acid, which is released from PKS, is converted to a CoA thioester by lcsD, and then lcsE hydrolyzes the thiol bond and shuttles the polyketide intermediate to lcsA. The C domain of the first module catalyzed the condensation of 4-methylhex-2-enoic acid and MePro carried by domain A1, followed by successive condensations of nine amino acids to trigger the elongation of the linear peptide. A5 and A6 domains of lcsA are proposed to incorporate leucine, A2 AHyMeOA, and A3 incorporates HyLeu. A4, A7 and A8 incorporate AIB. The AHyMeOA in leucinostatin A activated by the A2 might be produced by the second PKS (lcsB or lcsC) present within the cluster. The MePro is probably produced via leucine cyclization and may originate from a separate pathway, independent of the cluster. Another nonproteinogenic amino acid, beta-Ala, could be produced by an aspartic acid decarboxylase also localized outside of the cluster. Two candidates are VFPBJ_01400 and VFPBJ_10476. The final peptide scaffold may be released by the NAD(P)H-dependent thioester reductase (TE) at the C-terminal region of lcsA. Transamination of the lcsA product by the transaminase lcsP may produce DPD at the C-terminus. Further hydroxylation steps performed alternatively by the cytochrome P450 monooxygenases lcsI, lcsK and lcsN then yield the non-methylated leucinostatins precursor. It is also possible that leucines can be hydroxylated prior to their incorporation into the peptide. Varying extents of methylation then lead to the formation of leucinostatins A and B. This chain is Probable thioesterase lcsE, found in Purpureocillium lilacinum (Paecilomyces lilacinus).